The chain runs to 154 residues: Ribonuclease K6 (154 aa).

The first 27 residues, 1–27 (MGPHLLGRSSLLLLLLGMWWSVRPLCA), serve as a signal peptide directing secretion. Catalysis depends on histidine 42, which acts as the Proton acceptor. Intrachain disulfides connect cysteine 50–cysteine 108, cysteine 64–cysteine 118, cysteine 82–cysteine 133, and cysteine 89–cysteine 96. N-linked (GlcNAc...) asparagine glycosylation occurs at asparagine 59. Substrate-binding positions include 65–69 (KPENT) and lysine 90. Asparagine 104 carries N-linked (GlcNAc...) asparagine glycosylation. Histidine 149 functions as the Proton donor in the catalytic mechanism.

This sequence belongs to the pancreatic ribonuclease family. In terms of assembly, interacts (via N-terminus) with bacterial lipopolysaccharide (LPS). As to expression, kidney (at protein level).

Its subcellular location is the secreted. It localises to the lysosome. The protein resides in the cytoplasmic granule. Ribonuclease which shows a preference for the pyrimidines uridine and cytosine. Has potent antimicrobial activity against a range of Gram-positive and Gram-negative bacteria, including P.aeruginosa, A.baumanii, M.luteus, S.aureus, E.faecalis, E.faecium, S.saprophyticus and E.coli. Causes loss of bacterial membrane integrity, and also promotes agglutination of Gram-negative bacteria. Probably contributes to urinary tract sterility. Bactericidal activity is independent of RNase activity. This Bos taurus (Bovine) protein is Ribonuclease K6 (RNASE6).